The following is a 318-amino-acid chain: Transaldolase (318 aa).

Lys-132 (schiff-base intermediate with substrate) is an active-site residue.

This sequence belongs to the transaldolase family. Type 1 subfamily. In terms of assembly, homodimer.

The protein resides in the cytoplasm. It carries out the reaction D-sedoheptulose 7-phosphate + D-glyceraldehyde 3-phosphate = D-erythrose 4-phosphate + beta-D-fructose 6-phosphate. The protein operates within carbohydrate degradation; pentose phosphate pathway; D-glyceraldehyde 3-phosphate and beta-D-fructose 6-phosphate from D-ribose 5-phosphate and D-xylulose 5-phosphate (non-oxidative stage): step 2/3. Transaldolase is important for the balance of metabolites in the pentose-phosphate pathway. This chain is Transaldolase, found in Shewanella baltica (strain OS223).